We begin with the raw amino-acid sequence, 195 residues long: Thymidine kinase (195 aa).

ATP contacts are provided by residues 15-22 and 88-91; these read GSMFSGKS and DEVQ. The active-site Proton acceptor is E89. Zn(2+)-binding residues include C145, C148, C183, and C186.

The protein belongs to the thymidine kinase family. Homotetramer.

It localises to the cytoplasm. The catalysed reaction is thymidine + ATP = dTMP + ADP + H(+). This chain is Thymidine kinase, found in Bacillus cereus (strain ZK / E33L).